The chain runs to 65 residues: Large ribosomal subunit protein bL35 (65 aa).

Residues 1-16 show a composition bias toward basic residues; that stretch reads MPKMKTKSGAKKRFRV. Residues 1–25 are disordered; sequence MPKMKTKSGAKKRFRVRPGGTVKRG.

It belongs to the bacterial ribosomal protein bL35 family.

The chain is Large ribosomal subunit protein bL35 from Herminiimonas arsenicoxydans.